Consider the following 860-residue polypeptide: MQEQYRPEEIESKVQLHWDENRTFEVTEDESKEKYYCLSMLPYPSGRLHMGHVRNYTIGDVIARYQRMLGKNVLQPIGWDAFGLPAEGAAVKNNTAPAPWTYDNIAYMKNQLKMLGFGYDWSRELATCTPEYYRWEQKFFTELYKKGLVYKKTSAVNWCPNDQTVLANEQVIDGCCWRCDTKVERKEIPQWFIKITAYADELLNDLDKLDHWPDTVKTMQRNWIGRSEGVEISFDVNDYADKLTVYTTRPDTFMGCTYLAVAAGHPLAQQAAANNPALATFIDECRNTKVAEADMATMEKKGVDTGFKAIHPLTGEEIPVWAANFVLMEYGTGAVMAVPGHDQRDYEFASKYGLNIKPVILAADGSEPDLSEQALTEKGVLFNSGEFSGLDYEAGFNAIADKLAAMGVGERKVNYRLRDWGVSRQRYWGAPIPMVTLEDGTVLPTPEDQLPVILPEDVVMDGITSPIKADPEWAKTTVNGQPALRETDTFDTFMESSWYYARYTCPQYQEGMLDSKAANYWLPVDIYIGGIEHAIMHLLYFRFFHKLMRDAGMVNSDEPAKQLLCQGMVLADAFYYVGENGERNWVSPVDAIVERDEKGRIVKAKDAAGHELVYTGMSKMSKSKNNGIDPQVMVERYGADTVRLFMMFASPADMTLEWQESGVEGANRFLKRVWKLVYEHTTKGEVAALNVAALSEDQKALRRDIHKTIAKVTDDIGRRQTFNTAIAAIMELMNKLAKAPQEDEQDRALMQEALLAVVRMLNPFTPHASFTLWRELNGEGDIDNAPWPVADESAMVEDSTLVVVQVNGKVRGKITVAVDATEEQVRERAGQEHLVAKYLDGKTVRKVIYVPGKLLNLVVG.

The 'HIGH' region signature appears at 42–52 (PYPSGRLHMGH). The short motif at 619–623 (KMSKS) is the 'KMSKS' region element. ATP is bound at residue Lys622.

This sequence belongs to the class-I aminoacyl-tRNA synthetase family.

Its subcellular location is the cytoplasm. The catalysed reaction is tRNA(Leu) + L-leucine + ATP = L-leucyl-tRNA(Leu) + AMP + diphosphate. This chain is Leucine--tRNA ligase, found in Klebsiella pneumoniae subsp. pneumoniae (strain ATCC 700721 / MGH 78578).